Consider the following 508-residue polypeptide: Photosystem II CP47 reaction center protein (508 aa).

6 consecutive transmembrane segments (helical) span residues 21–36 (SVHI…WAGS), 101–115 (IVFS…IWHW), 140–156 (GIHL…FGAF), 203–218 (IAAG…FHLS), 237–252 (VLSS…AFVV), and 457–472 (SFAL…HGAR).

It belongs to the PsbB/PsbC family. PsbB subfamily. As to quaternary structure, PSII is composed of 1 copy each of membrane proteins PsbA, PsbB, PsbC, PsbD, PsbE, PsbF, PsbH, PsbI, PsbJ, PsbK, PsbL, PsbM, PsbT, PsbX, PsbY, PsbZ, Psb30/Ycf12, at least 3 peripheral proteins of the oxygen-evolving complex and a large number of cofactors. It forms dimeric complexes. Binds multiple chlorophylls. PSII binds additional chlorophylls, carotenoids and specific lipids. is required as a cofactor.

Its subcellular location is the plastid. It is found in the chloroplast thylakoid membrane. In terms of biological role, one of the components of the core complex of photosystem II (PSII). It binds chlorophyll and helps catalyze the primary light-induced photochemical processes of PSII. PSII is a light-driven water:plastoquinone oxidoreductase, using light energy to abstract electrons from H(2)O, generating O(2) and a proton gradient subsequently used for ATP formation. The chain is Photosystem II CP47 reaction center protein from Nuphar advena (Common spatterdock).